A 171-amino-acid polypeptide reads, in one-letter code: MTNFTFDGAHSSLEFQIKHLMVSKVKGSFDQFDVAVEGDINDFSTLKATATIIPSSINTKNEARDNHLKSGDFFGTDEFDKITFVTKSVSESKVVGDLTIKGITNEETFDVEFNGVSKNPMDGSQVTGIIVTGTINREKYGINFNQALETGGVMLGKDVKFEASAEFSISE.

The protein belongs to the UPF0312 family.

The chain is UPF0312 protein SAOUHSC_03022 from Staphylococcus aureus (strain NCTC 8325 / PS 47).